Here is a 309-residue protein sequence, read N- to C-terminus: Porphobilinogen deaminase (309 aa).

An S-(dipyrrolylmethanemethyl)cysteine modification is found at cysteine 241.

Belongs to the HMBS family. In terms of assembly, monomer. Requires dipyrromethane as cofactor.

It catalyses the reaction 4 porphobilinogen + H2O = hydroxymethylbilane + 4 NH4(+). It participates in porphyrin-containing compound metabolism; protoporphyrin-IX biosynthesis; coproporphyrinogen-III from 5-aminolevulinate: step 2/4. Tetrapolymerization of the monopyrrole PBG into the hydroxymethylbilane pre-uroporphyrinogen in several discrete steps. This chain is Porphobilinogen deaminase, found in Campylobacter concisus (strain 13826).